Consider the following 210-residue polypeptide: Inner membrane-spanning protein YciB (210 aa).

Helical transmembrane passes span 12 to 32 (EVSP…FFFA), 53 to 73 (IFIA…VSWM), 78 to 98 (LPMM…LTLW), 115 to 135 (LFGA…GYVF), 153 to 173 (WGVF…SFST), and 175 to 195 (FWVA…TLAQ).

It belongs to the YciB family.

The protein localises to the cell inner membrane. In terms of biological role, plays a role in cell envelope biogenesis, maintenance of cell envelope integrity and membrane homeostasis. The polypeptide is Inner membrane-spanning protein YciB (Sinorhizobium medicae (strain WSM419) (Ensifer medicae)).